The following is a 364-amino-acid chain: Arabinose metabolism transcriptional repressor (364 aa).

Residues 6 to 74 (LPKYLQLKQE…QGSGTFVSRP (69 aa)) enclose the HTH gntR-type domain. The segment at residues 34–53 (EHEIANQFQLSRHTVRQALG) is a DNA-binding region (H-T-H motif).

It is found in the cytoplasm. Its function is as follows. Transcriptional repressor of the arabinose utilization genes. This Geobacillus stearothermophilus (Bacillus stearothermophilus) protein is Arabinose metabolism transcriptional repressor (araR).